A 480-amino-acid chain; its full sequence is Glycogen synthase (480 aa).

K15 provides a ligand contact to ADP-alpha-D-glucose.

Belongs to the glycosyltransferase 1 family. Bacterial/plant glycogen synthase subfamily.

The catalysed reaction is [(1-&gt;4)-alpha-D-glucosyl](n) + ADP-alpha-D-glucose = [(1-&gt;4)-alpha-D-glucosyl](n+1) + ADP + H(+). The protein operates within glycan biosynthesis; glycogen biosynthesis. In terms of biological role, synthesizes alpha-1,4-glucan chains using ADP-glucose. In Rhizobium tropici, this protein is Glycogen synthase.